A 76-amino-acid polypeptide reads, in one-letter code: NADH dehydrogenase [ubiquinone] 1 subunit C1, mitochondrial (76 aa).

Residues 1-27 (MAPSVVLRSFSRLLAPARLPSCSSTRS) constitute a mitochondrion transit peptide. The chain crosses the membrane as a helical span at residues 40-59 (NWLAVGLSVGASVFMWIYLI).

It belongs to the complex I NDUFC1 subunit family. As to quaternary structure, complex I is composed of 45 different subunits.

Its subcellular location is the mitochondrion inner membrane. In terms of biological role, accessory subunit of the mitochondrial membrane respiratory chain NADH dehydrogenase (Complex I), that is believed not to be involved in catalysis. Complex I functions in the transfer of electrons from NADH to the respiratory chain. The immediate electron acceptor for the enzyme is believed to be ubiquinone. This Mus musculus (Mouse) protein is NADH dehydrogenase [ubiquinone] 1 subunit C1, mitochondrial (Ndufc1).